The chain runs to 208 residues: MFIKICGIKTPNELKIIEKYGDFTGVILECVSKRKIGVESAKNLIEISNIPVFAVSTTTEVLAWKNIIELTGTNYLQMHSNIDSKSVEAIKKEYGCFIMKSFKIPEKSEFPEIDAENIILDIERYEVDRILLDTGKGCGMVHDHRISQIIAKKFDIVLAGGLNTDNVSEIIKKVKPFGVDVSSGVENKNSKDEGLIKKFYENVKSVKL.

It belongs to the TrpF family.

The catalysed reaction is N-(5-phospho-beta-D-ribosyl)anthranilate = 1-(2-carboxyphenylamino)-1-deoxy-D-ribulose 5-phosphate. It functions in the pathway amino-acid biosynthesis; L-tryptophan biosynthesis; L-tryptophan from chorismate: step 3/5. This Methanococcus vannielii (strain ATCC 35089 / DSM 1224 / JCM 13029 / OCM 148 / SB) protein is N-(5'-phosphoribosyl)anthranilate isomerase.